The following is a 424-amino-acid chain: CinA-like protein (424 aa).

This sequence belongs to the CinA family.

The sequence is that of CinA-like protein from Shewanella putrefaciens (strain CN-32 / ATCC BAA-453).